Consider the following 695-residue polypeptide: Lupanine 17-hydroxylase [cytochrome c] (695 aa).

Positions 1-26 (MSANKNIWIIRLGVAFVCVAIGAAQA) are cleaved as a signal peptide. Residues 598 to 677 (AMAESGRHIF…ALQAFILQKA (80 aa)) form the Cytochrome c domain. Heme c is bound by residues cysteine 612, cysteine 615, and histidine 616.

Belongs to the bacterial PQQ dehydrogenase family. As to quaternary structure, monomer. Pyrroloquinoline quinone is required as a cofactor. The cofactor is heme c.

The protein resides in the periplasm. It carries out the reaction lupanine + 2 Fe(III)-[cytochrome c] + H2O = 17-hydroxylupanine + 2 Fe(II)-[cytochrome c] + 2 H(+). Functionally, catalyzes the first reaction in the catabolism of the alkaloid lupanine. It dehydrogenates lupanine, which can then be hydrated to produce 17-hydroxylupanine. This is Lupanine 17-hydroxylase [cytochrome c] (luh) from Pseudomonas sp.